The chain runs to 162 residues: Cyclic pyranopterin monophosphate synthase (162 aa).

Substrate-binding positions include 75-77 (LCH) and 113-114 (ME). The active site involves Asp128.

Belongs to the MoaC family. As to quaternary structure, homohexamer; trimer of dimers.

It catalyses the reaction (8S)-3',8-cyclo-7,8-dihydroguanosine 5'-triphosphate = cyclic pyranopterin phosphate + diphosphate. The protein operates within cofactor biosynthesis; molybdopterin biosynthesis. Its function is as follows. Catalyzes the conversion of (8S)-3',8-cyclo-7,8-dihydroguanosine 5'-triphosphate to cyclic pyranopterin monophosphate (cPMP). This chain is Cyclic pyranopterin monophosphate synthase, found in Burkholderia lata (strain ATCC 17760 / DSM 23089 / LMG 22485 / NCIMB 9086 / R18194 / 383).